The primary structure comprises 457 residues: D-xylose transporter (457 aa).

10 helical membrane passes run 14 to 34 (ALGG…ILFI), 46 to 66 (GWVV…IGPS), 81 to 101 (IIFF…TLII), 104 to 124 (IILG…LAEL), 131 to 151 (GTVS…AYIT), 164 to 184 (WMLG…LILP), 244 to 264 (LIIG…TVLY), 281 to 301 (LLAH…AVAI), 309 to 329 (KIVN…SIGM), and 338 to 358 (AAII…ATWG). Residue glutamine 138 coordinates beta-D-xylose. Beta-D-xylose-binding positions include 254 to 255 (QQ) and asparagine 260. Beta-D-xylose is bound by residues tryptophan 362 and asparagine 385. 2 helical membrane-spanning segments follow: residues 380-400 (FASV…PSLL) and 402-422 (FFGT…SIWF).

The protein belongs to the major facilitator superfamily. Sugar transporter (TC 2.A.1.1) family.

It is found in the cell membrane. With respect to regulation, transport is inhibited by 6-deoxy-D-glucose. In terms of biological role, uptake of D-xylose across the boundary membrane with the concomitant transport of protons into the cell (symport system). Transport is driven by the proton motive force generated by either malolactic fermentation or by the metabolism of D-glucose. This is D-xylose transporter from Levilactobacillus brevis (Lactobacillus brevis).